The chain runs to 145 residues: Photosystem I reaction center subunit VI-2, chloroplastic (145 aa).

The N-terminal 50 residues, 1-50 (MASFATIAAVQPSAAVKGLGGSSLAGAKLFIKPSRQSFKTKSTRAGAVVA), are a transit peptide targeting the chloroplast. Residues 102–118 (LLLKFLILGGGSLLTYV) form a helical membrane-spanning segment. Residues 126-145 (VLPIKRGPQEPPKLGPRGKL) form a disordered region.

The protein belongs to the psaH family.

It localises to the plastid. Its subcellular location is the chloroplast thylakoid membrane. In terms of biological role, possible role could be the docking of the LHC I antenna complex to the core complex. This is Photosystem I reaction center subunit VI-2, chloroplastic (PSAH2) from Arabidopsis thaliana (Mouse-ear cress).